The following is a 185-amino-acid chain: uncharacterized protein (185 aa).

Helical transmembrane passes span 32-52, 66-86, and 155-175; these read LIFVPDSPTATFFFLFVLLAF, LVTLVKYGLWAVAMNFLVLAV, and IGYGTFWLSIFSIALAYFLVV.

Its subcellular location is the cell membrane. This is an uncharacterized protein from Bacillus subtilis (strain 168).